The primary structure comprises 311 residues: tRNA dimethylallyltransferase (311 aa).

11–18 (GPTASGKS) is a binding site for ATP. 13–18 (TASGKS) serves as a coordination point for substrate. Interaction with substrate tRNA regions lie at residues 36–39 (DSMQ) and 160–164 (QRLIR).

It belongs to the IPP transferase family. As to quaternary structure, monomer. It depends on Mg(2+) as a cofactor.

The enzyme catalyses adenosine(37) in tRNA + dimethylallyl diphosphate = N(6)-dimethylallyladenosine(37) in tRNA + diphosphate. Its function is as follows. Catalyzes the transfer of a dimethylallyl group onto the adenine at position 37 in tRNAs that read codons beginning with uridine, leading to the formation of N6-(dimethylallyl)adenosine (i(6)A). In Rickettsia typhi (strain ATCC VR-144 / Wilmington), this protein is tRNA dimethylallyltransferase.